The following is a 168-amino-acid chain: CDP-archaeol synthase (168 aa).

A run of 5 helical transmembrane segments spans residues 4–24 (IFEAFWYILPAYFANSSPVVL), 51–71 (GFFGGITVGTVVGTIQHLMFP), 81–101 (VGVAFLLSLGALVGDLIGSFI), 112–132 (PAVGLDQWGFLISALCFAYPL), and 138–158 (GEVLFLLVVTPVIHWLANVFA).

The protein belongs to the CDP-archaeol synthase family. Mg(2+) serves as cofactor.

The protein localises to the cell membrane. The enzyme catalyses 2,3-bis-O-(geranylgeranyl)-sn-glycerol 1-phosphate + CTP + H(+) = CDP-2,3-bis-O-(geranylgeranyl)-sn-glycerol + diphosphate. The protein operates within membrane lipid metabolism; glycerophospholipid metabolism. Its function is as follows. Catalyzes the formation of CDP-2,3-bis-(O-geranylgeranyl)-sn-glycerol (CDP-archaeol) from 2,3-bis-(O-geranylgeranyl)-sn-glycerol 1-phosphate (DGGGP) and CTP. This reaction is the third ether-bond-formation step in the biosynthesis of archaeal membrane lipids. This Pyrococcus abyssi (strain GE5 / Orsay) protein is CDP-archaeol synthase.